The sequence spans 520 residues: Cytosol aminopeptidase (520 aa).

The Zn(2+) site is built by L200, M201, K280, and D285. K280, D285, S290, and K292 together coordinate substrate. D285 is a binding site for Mg(2+). K292 is a catalytic residue. Positions 301, 303, 362, and 364 each coordinate Zn(2+). Residues D303 and D362 each contribute to the substrate site. Mg(2+) is bound by residues D362 and E364. R366 is an active-site residue.

The protein belongs to the peptidase M17 family. As to quaternary structure, homohexamer. The cofactor is Zn(2+). Mn(2+) serves as cofactor.

The protein localises to the cytoplasm. It carries out the reaction Release of an N-terminal amino acid, Xaa-|-Yaa-, in which Xaa is preferably Leu, but may be other amino acids including Pro although not Arg or Lys, and Yaa may be Pro. Amino acid amides and methyl esters are also readily hydrolyzed, but rates on arylamides are exceedingly low.. The enzyme catalyses an S-substituted L-cysteinylglycine + H2O = an S-substituted L-cysteine + glycine. The catalysed reaction is L-cysteinylglycine + H2O = L-cysteine + glycine. It catalyses the reaction S-benzyl-L-cysteinylglycine + H2O = S-benzyl-L-cysteine + glycine. It carries out the reaction Release of N-terminal proline from a peptide.. Its function is as follows. Cytosolic metallopeptidase that catalyzes the removal of unsubstituted N-terminal hydrophobic amino acids from various peptides. The presence of Zn(2+) ions is essential for the peptidase activity, and the association with other cofactors can modulate the substrate spectificity of the enzyme. For instance, in the presence of Mn(2+), it displays a specific Cys-Gly hydrolyzing activity of Cys-Gly-S-conjugates. Involved in the metabolism of glutathione and in the degradation of glutathione S-conjugates, which may play a role in the control of the cell redox status. The protein is Cytosol aminopeptidase (lap3) of Xenopus tropicalis (Western clawed frog).